The chain runs to 540 residues: Probable quinate permease (540 aa).

The Cytoplasmic portion of the chain corresponds to 1-22; sequence MSILALVEDRPTPKEVYNWRIY. The helical transmembrane segment at 23-43 threads the bilayer; the sequence is LLAAVASFTSCMIGYDSAFIG. The Extracellular portion of the chain corresponds to 44–74; sequence TTLALGSFREEFEFTTMEPAAVNRVSANIVS. The helical transmembrane segment at 75–95 threads the bilayer; sequence CYQAGAFFGAFFAYPIGHFWG. Topologically, residues 96–97 are cytoplasmic; the sequence is RK. The helical transmembrane segment at 98–118 threads the bilayer; that stretch reads WGLLSAAAIFTLGAGLMLGAN. At 119–130 the chain is on the extracellular side; the sequence is GDRGLGLIYGGR. Residues 131–151 traverse the membrane as a helical segment; it reads VLAGIGVGAGSNITPIYISEL. The Cytoplasmic portion of the chain corresponds to 152–157; the sequence is APPSIR. Residues 158–178 form a helical membrane-spanning segment; the sequence is GHLVGVYELGWQIGGLVGFWI. Residues 179–193 lie on the Extracellular side of the membrane; the sequence is NYGVSETLAPSHKQW. Residues 194-214 form a helical membrane-spanning segment; sequence IIPFAVQLIPSGLLLIGAVFL. At 215–285 the chain is on the cytoplasmic side; it reads RESPRWLFSS…AGTNKKVMYR (71 aa). Residues 286–306 traverse the membrane as a helical segment; that stretch reads LFLGSMLFFWQNGSGINAINY. Topologically, residues 307 to 325 are extracellular; the sequence is YSPTVFKSIGLRGTNTGMF. The chain crosses the membrane as a helical span at residues 326-346; that stretch reads STGIFGVVKTVVTFIWLLYLI. Residues 347-352 lie on the Cytoplasmic side of the membrane; sequence DRMGRR. A helical transmembrane segment spans residues 353 to 373; that stretch reads LLLLVGAAGASVCLWIVGAYI. Residues 374 to 387 lie on the Extracellular side of the membrane; that stretch reads KIANPAKNGNGEMT. Residues 388 to 408 form a helical membrane-spanning segment; the sequence is GGGIAAMFFFYLYTVFYTPSW. The Cytoplasmic portion of the chain corresponds to 409-456; it reads NGTPWVMNSEMFEPNMRSLAQACAAASNWLWNFLISRFTPQMFDKMGY. The helical transmembrane segment at 457–477 threads the bilayer; the sequence is GVWFFFASLMLCSIVIVFFLI. Residues 478 to 540 are Extracellular-facing; it reads PETKGIPLES…RLESVQPKEA (63 aa). A disordered region spans residues 519 to 540; it reads IEESGYTKSGEQRLESVQPKEA. Residues 528 to 540 show a composition bias toward basic and acidic residues; that stretch reads GEQRLESVQPKEA.

It belongs to the major facilitator superfamily. Sugar transporter (TC 2.A.1.1) family. As to quaternary structure, interacts with creB. Ubiquitinated. Deubiquitinated by creB, probably to control its activity or amount.

It is found in the cell membrane. Functionally, integral membrane transporter that imports quinic acid to be catabolized as a carbon source. The polypeptide is Probable quinate permease (qutD) (Aspergillus clavatus (strain ATCC 1007 / CBS 513.65 / DSM 816 / NCTC 3887 / NRRL 1 / QM 1276 / 107)).